The primary structure comprises 358 residues: MPGKKISVLLVDDSAVVRQVLVAILNETPDIHVMAAASDPIFAMGKLAHEWPDVIVLDVEMPRMDGITFLKKIMSERPTPVVICSSLTQKGAETSLQALSAGAVEIITKPTTGLKNFLIESAAELVAAIRAAANSNVKNLGKRTATPVLTPASKLTADAILPAASGHSMAQTTERIVAIGTSTGGTQALEAVLTALPRVCPGIVIVQHMPEKFTASFAERLNGLSQIEVREARNNDRILPGLALIAPGGKHMMVTRSGAYYHVQVIDGPLVNRHRPSVDVLFRSVARFAGKNATGIIMTGMGDDGARGLKEMLDAGSSTVAQDEASCVVFGMPKEAIKLNAAQRIMPLQEIHQAILHR.

The Response regulatory domain occupies 7–124; it reads SVLLVDDSAV…KNFLIESAAE (118 aa). Asp58 carries the 4-aspartylphosphate modification. A CheB-type methylesterase domain is found at 170-358; that stretch reads AQTTERIVAI…QEIHQAILHR (189 aa). Active-site residues include Ser182, His208, and Asp304.

It belongs to the CheB family. Phosphorylated by CheA. Phosphorylation of the N-terminal regulatory domain activates the methylesterase activity.

Its subcellular location is the cytoplasm. It catalyses the reaction [protein]-L-glutamate 5-O-methyl ester + H2O = L-glutamyl-[protein] + methanol + H(+). The enzyme catalyses L-glutaminyl-[protein] + H2O = L-glutamyl-[protein] + NH4(+). Functionally, involved in chemotaxis. Part of a chemotaxis signal transduction system that modulates chemotaxis in response to various stimuli. Catalyzes the demethylation of specific methylglutamate residues introduced into the chemoreceptors (methyl-accepting chemotaxis proteins or MCP) by CheR. Also mediates the irreversible deamidation of specific glutamine residues to glutamic acid. This is Protein-glutamate methylesterase/protein-glutamine glutaminase 2 from Pseudomonas syringae pv. tomato (strain ATCC BAA-871 / DC3000).